The primary structure comprises 297 residues: MDIIGQVYCFTGAPHTITCLLREQFINWYIKYKRSENYPAFRELVVMYRLFLALGFLTFINAAGQRCRFTDVERDKGYTGMLLKGRLRKTAGNGRTVELICGRGNHNYTCESGVLKESSPRQARCGCKGILEMLFDMPKEERPSPMYDSVTYDPTPNTPTTVGKDGIWNGVDYRNGSTVKPYCDTGPVINGSSKAVCVSGKWVPTLGVCPKMCSIGSLKENGKFVDVTATTKGDELNPPPREQTLIPIVRKVDKDKVQHGVKVVALCKAEDSTTAAEGVQEFECDNGKWKPEPVPCP.

N-linked (GlcNAc...) asparagine glycosylation is found at asparagine 107, asparagine 175, and asparagine 190. One can recognise a Sushi domain in the interval 151-211 (TYDPTPNTPT…WVPTLGVCPK (61 aa)). The cysteines at positions 183 and 209 are disulfide-linked.

In terms of assembly, interacts with mouse IL33 (in reduced form).

It localises to the secreted. The protein localises to the host nucleus. Its function is as follows. Secreted protein which suppresses the host allergic response by inhibiting the interaction of host IL33 with its receptor in order to maintain parasitic infection. Binds to both host IL33 and host nuclear DNA and this dual binding blocks the interaction of IL33 with its receptor, and tethers IL33 within necrotic cells, preventing its release, and blocking allergic response initiation. The sequence is that of Alarmin release inhibitor from Heligmosomoides polygyrus (Parasitic roundworm).